A 439-amino-acid polypeptide reads, in one-letter code: MSASILLCDGFDVRRILTGKLNGDESSTVTTEEDDEAVFSGEEWCGESSYCFYFVKQFAYDDPEIKAKIDEADHEVYHCNTDRIHIANRLKSKRAARLSLVASMETLMSMKINEVEKEQEVVRGRIYRLGERLSEIKMEIELLDVQMACVLNQRDKAVERIKFLRMQRDKGNAAFYQSRVVMKKAIELAASGNVRDLEELADSEVEKFMSRWNNDKAFRDNYKKRILPSVNERKLRCDVQIRDLEGNLDTENGNETVVKKAIEYKRFSTEEESDDFDIPVYEKLGKEEKEIDEETLKEKKREEQLEKARLAMERKRKLHEKAAAKAVIRVKKEAEKKRKELDKRAKKKKAVCKSSSVDVDRTTETVSEASKPEKEKLLNGRSVFPKQRSYNYRYHGKGNDAVLKAIIKRRKAYRLWVWTVSSAAVALPLALLVVFYYVR.

Residues 286–354 are a coiled coil; sequence KEEKEIDEET…AKKKKAVCKS (69 aa). A helical transmembrane segment spans residues 415–435; the sequence is LWVWTVSSAAVALPLALLVVF.

It belongs to the plant Proton pump-interactor protein family.

The protein resides in the cell membrane. The protein localises to the endoplasmic reticulum membrane. In terms of biological role, may regulate plasma membrane ATPase activity. The chain is Proton pump-interactor 4 (PPI4) from Arabidopsis thaliana (Mouse-ear cress).